The sequence spans 278 residues: Sulfur carrier protein FdhD (278 aa).

Cys-120 functions as the Cysteine persulfide intermediate in the catalytic mechanism.

The protein belongs to the FdhD family.

Its subcellular location is the cytoplasm. In terms of biological role, required for formate dehydrogenase (FDH) activity. Acts as a sulfur carrier protein that transfers sulfur from IscS to the molybdenum cofactor prior to its insertion into FDH. This Bordetella petrii (strain ATCC BAA-461 / DSM 12804 / CCUG 43448) protein is Sulfur carrier protein FdhD.